We begin with the raw amino-acid sequence, 555 residues long: 6-phosphofructo-2-kinase/fructose-2,6-bisphosphatase 3 (555 aa).

Residues 1–245 (MPLELTQSRV…VYYLMNIHVQ (245 aa)) form a 6-phosphofructo-2-kinase region. 42–50 (GLPARGKTY) serves as a coordination point for ATP. Beta-D-fructose 6-phosphate is bound by residues Arg75 and Arg99. Asp125 is an active-site residue. Residues Thr127 and Arg133 each contribute to the beta-D-fructose 6-phosphate site. The active site involves Cys155. 164-169 (NIMEVK) is a binding site for ATP. 3 residues coordinate beta-D-fructose 6-phosphate: Lys169, Arg190, and Tyr194. The tract at residues 246 to 555 (PRTIYLCRHG…CHIFSKFSPY (310 aa)) is fructose-2,6-bisphosphatase. Arg253 serves as a coordination point for beta-D-fructose 2,6-bisphosphate. His254 serves as the catalytic Tele-phosphohistidine intermediate. Residues Asn260 and Gly266 each coordinate beta-D-fructose 2,6-bisphosphate. Residue Glu323 is the Proton donor/acceptor of the active site. Residues Tyr334, Arg348, Lys352, Tyr363, Gln389, and Arg393 each coordinate beta-D-fructose 2,6-bisphosphate. Residue 345 to 348 (YALR) participates in ATP binding. Residues 389–393 (QAVLR) and Tyr425 each bind ATP. Positions 475 to 504 (KQDAKKGPNPLMRRNSVTPLASPEPTKKPR) are disordered. Ser490 bears the Phosphoserine; by AMPK and PKA mark. Thr492 is modified (phosphothreonine). At Ser496 the chain carries Phosphoserine.

The protein in the C-terminal section; belongs to the phosphoglycerate mutase family. In terms of assembly, homodimer. Forms a heterodimer with PFKFB2. Phosphorylation by AMPK stimulates activity.

The catalysed reaction is beta-D-fructose 2,6-bisphosphate + H2O = beta-D-fructose 6-phosphate + phosphate. The enzyme catalyses beta-D-fructose 6-phosphate + ATP = beta-D-fructose 2,6-bisphosphate + ADP + H(+). Catalyzes both the synthesis and degradation of fructose 2,6-bisphosphate. The sequence is that of 6-phosphofructo-2-kinase/fructose-2,6-bisphosphatase 3 (Pfkfb3) from Rattus norvegicus (Rat).